A 418-amino-acid polypeptide reads, in one-letter code: MGQTLAEKILSHKVGRPVRAGELVVVEVDQVMVVDSIAGSFFKRLEYLEATPRYPERVSIVIDHVAPAANLEVAKAQKEIREWGKRHGIRVFDVGRGVCHQVLIEEGLAQPGWVVVGSDSHSTTYGAVGAFGTGMGATDIALAAASGRTWLRVPESVKVVFRGRLPKGVTAKDAALEMVRLLTAEGATYMAVEIHLLDGAEALTRGERMTLANLTVEAGAKAGLVVPSGEILEMYRVPDWLYPDPDARYAKEVEIDLSALTPRVSVPFYVDNVHEVAQVKGKRVDQVFIGTCTNGRIEDLRAAAEVLRGRKVAPWVRLLVVPASSQVLEEAARDGTLLTLLEAGATIGTPGCGPCMGRHMGVLAPGEVCVSTSNRNFRGRMGAPDAEIYLASPRVAAASAVAGYLTTPEELEEEEVHA.

[4Fe-4S] cluster contacts are provided by Cys292, Cys352, and Cys355.

Belongs to the aconitase/IPM isomerase family. Heterodimer of HacA and HacB. The cofactor is [4Fe-4S] cluster.

It catalyses the reaction (2R,3S)-homoisocitrate = cis-homoaconitate + H2O. The protein operates within amino-acid biosynthesis; L-lysine biosynthesis via AAA pathway; L-alpha-aminoadipate from 2-oxoglutarate: step 3/5. Is not inhibited by lysine. Its function is as follows. Catalyzes the reversible hydration of cis-homoaconitate ((Z)-but-1-ene-1,2,4-tricarboxylate) to homoisocitrate ((1R,2S)-1-hydroxybutane-1,2,4-tricarboxylate). Can catalyze neither the dehydration of (R)-homocitrate ((2R)-2-hydroxybutane-1,2,4-tricarboxylate) into cis-homoaconitate in vitro, nor the reverse reaction. Is not active toward (S)-homocitrate, cis-aconitate or citrate as substrate. This chain is Homoaconitase large subunit (hacA), found in Thermus thermophilus (strain ATCC BAA-163 / DSM 7039 / HB27).